Here is a 505-residue protein sequence, read N- to C-terminus: AMP phosphorylase (505 aa).

Residues glycine 170, 196-201 (SRAITS), and threonine 205 each bind AMP. The Proton donor role is filled by aspartate 258. AMP-binding residues include serine 266 and lysine 290.

Belongs to the thymidine/pyrimidine-nucleoside phosphorylase family. Type 2 subfamily.

It catalyses the reaction AMP + phosphate = alpha-D-ribose 1,5-bisphosphate + adenine. The enzyme catalyses CMP + phosphate = cytosine + alpha-D-ribose 1,5-bisphosphate. It carries out the reaction UMP + phosphate = alpha-D-ribose 1,5-bisphosphate + uracil. Its function is as follows. Catalyzes the conversion of AMP and phosphate to adenine and ribose 1,5-bisphosphate (R15P). Exhibits phosphorylase activity toward CMP and UMP in addition to AMP. Functions in an archaeal AMP degradation pathway, together with R15P isomerase and RubisCO. This Methanococcus vannielii (strain ATCC 35089 / DSM 1224 / JCM 13029 / OCM 148 / SB) protein is AMP phosphorylase.